The primary structure comprises 219 residues: MPPPETMFCAQQINIPPELPDILKQFTKAAIRTQPHDLLQWSAAYFDSLSKGEPLPVKDRVELQVATQKTDSGLTPGLLKVLNKQLSSKMSVKIADLKQKWTDLCLPEEQLQNILGLDNFQDDIDWLKFLSLGCSALGGSISSALKYACEILTEDPEGGAAHIPFDTFTYIYKYLAHIDGDISEMQIEDVLNVLQSEAERQNGLIQPRNFLSSQCPLLS.

The RIIa domain occupies 17 to 54; that stretch reads PELPDILKQFTKAAIRTQPHDLLQWSAAYFDSLSKGEP.

It belongs to the ropporin family. In terms of assembly, component of axonemal radial spoke complexes.

It localises to the cell projection. The protein localises to the cilium. The protein resides in the flagellum. Functions as part of axonemal radial spoke complexes that play an important part in the motility of sperm and cilia. Important for male fertility. Involved in fibrous sheath integrity and sperm motility, plays a role in PKA-dependent signaling processes required for spermatozoa capacitation. The sequence is that of Ropporin-1-like protein (ropn1l) from Xenopus laevis (African clawed frog).